The primary structure comprises 187 residues: Interferon beta (187 aa).

The signal sequence occupies residues 1 to 21; that stretch reads MTNKCLLQIALLLCFSTTALS. Tyr-24 is subject to Phosphotyrosine. A disulfide bridge connects residues Cys-52 and Cys-162. Asn-101 is a glycosylation site (N-linked (GlcNAc...) asparagine).

This sequence belongs to the alpha/beta interferon family. Monomer.

It localises to the secreted. Functionally, type I interferon cytokine that plays a key role in the innate immune response to infection, developing tumors and other inflammatory stimuli. Signals via binding to high-affinity (IFNAR2) and low-affinity (IFNAR1) heterodimeric receptor, activating the canonical Jak-STAT signaling pathway resulting in transcriptional activation or repression of interferon-regulated genes that encode the effectors of the interferon response, such as antiviral proteins, regulators of cell proliferation and differentiation, and immunoregulatory proteins. Signals mostly via binding to a IFNAR1-IFNAR2 heterodimeric receptor, but can also function with IFNAR1 alone and independently of Jak-STAT pathways. Elicits a wide variety of responses, including antiviral and antibacterial activities, and can regulate the development of B-cells, myelopoiesis and lipopolysaccharide (LPS)-inducible production of tumor necrosis factor. Plays a role in neuronal homeostasis by regulating dopamine turnover and protecting dopaminergic neurons: acts by promoting neuronal autophagy and alpha-synuclein clearance, thereby preventing dopaminergic neuron loss. IFNB1 is more potent than interferon-alpha (IFN-alpha) in inducing the apoptotic and antiproliferative pathways required for control of tumor cell growth. The sequence is that of Interferon beta (IFNB1) from Macaca fascicularis (Crab-eating macaque).